Here is a 183-residue protein sequence, read N- to C-terminus: uncharacterized protein (183 aa).

This is an uncharacterized protein from Saccharomyces cerevisiae (strain ATCC 204508 / S288c) (Baker's yeast).